A 535-amino-acid chain; its full sequence is Sodium/hydrogen exchanger 9B2 (535 aa).

Residues 1–14 are compositionally biased toward basic and acidic residues; it reads MRNQDKRAAHKDSE. A disordered region spans residues 1–70; the sequence is MRNQDKRAAH…TPAEPNHLQR (70 aa). Over 1–85 the chain is Cytoplasmic; the sequence is MRNQDKRAAH…ACPPRGLLAR (85 aa). 2 stretches are compositionally biased toward polar residues: residues 16-34 and 46-58; these read STEVNHTASSYQGRQQETG and TEGSNLLNNNEKM. The helical transmembrane segment at 86–103 threads the bilayer; it reads VITNVTMVILLWAVVWSV. Residues 104–112 lie on the Extracellular side of the membrane; the sequence is TGSECLPGG. A helical transmembrane segment spans residues 113–132; sequence NLFGIIMLFYCAIIGGKLFG. The Cytoplasmic portion of the chain corresponds to 133 to 143; it reads LIKLPTLPPLP. The chain crosses the membrane as a helical span at residues 144–160; it reads PLLGMLLAGFLIRNVPV. Residues 161–170 are Extracellular-facing; the sequence is ISDNIQIKHK. Residues 171-188 form a helical membrane-spanning segment; sequence WSSALRSIALSVILVRAG. Residues 189–199 are Cytoplasmic-facing; it reads LGLDSNALKKL. The chain crosses the membrane as a helical span at residues 200–226; the sequence is KGVCVRLSLGPCLIEACTSAVLAYFLM. Residues 227 to 232 are Extracellular-facing; that stretch reads GLPWQW. A helical transmembrane segment spans residues 233–241; sequence GFMLGFVLG. The Cytoplasmic portion of the chain corresponds to 242–269; that stretch reads AVSPAVVVPSMLLLQEGGYGVEKGIPTL. The Na(+) site is built by Val243, Gly274, Asp277, and Asp278. A helical membrane pass occupies residues 270–289; the sequence is LMAAGSFDDILAITGFNTCL. The Extracellular segment spans residues 290-299; sequence GMAFSTGSTV. Residues 300-323 form a helical membrane-spanning segment; sequence FNVLKGVLEVIIGVVTGLVLGFFI. Residues 324–338 are Cytoplasmic-facing; that stretch reads QYFPSSDQDNLVWKR. A helical membrane pass occupies residues 339-356; sequence AFLVLGLSVLAVFSSTYF. Residues 357 to 360 lie on the Extracellular side of the membrane; that stretch reads GFPG. Residues 361-372 traverse the membrane as a helical segment; sequence SGGLCTLVTAFL. The Cytoplasmic portion of the chain corresponds to 373–389; it reads AGRGWASTKTDVEKVIA. Residues 390-410 form a helical membrane-spanning segment; sequence VAWDIFQPLLFGLIGAEVLIT. Residues 411–416 lie on the Extracellular side of the membrane; sequence ALRPET. A helical transmembrane segment spans residues 417–439; that stretch reads IGLCVATLGIAVLIRILVTYLMV. At 440–460 the chain is on the cytoplasmic side; it reads CFAGFNIKEKIFISFAWLPKA. Residues 461–472 traverse the membrane as a helical segment; that stretch reads TVQAAIGSVALD. The Extracellular segment spans residues 473 to 485; the sequence is TARSHGEKQLEGY. A helical transmembrane segment spans residues 486-508; the sequence is GMDVLTVAFLSIIITAPVGSLLI. The Cytoplasmic portion of the chain corresponds to 509–535; it reads GLLGPRLLQKAEQNKDEEDQGETSIQV.

Belongs to the monovalent cation:proton antiporter 1 (CPA1) transporter (TC 2.A.36) family. In terms of assembly, homodimer; dimerization is essential for SLC9B2 activity. Lipids seem to play a role in the stabilization of the dimerization subdomain.

Its subcellular location is the cell membrane. It is found in the mitochondrion membrane. The protein resides in the endosome membrane. The protein localises to the recycling endosome membrane. It localises to the lysosome membrane. Its subcellular location is the cytoplasmic vesicle. It is found in the secretory vesicle. The protein resides in the synaptic vesicle membrane. The protein localises to the cell projection. It localises to the cilium. Its subcellular location is the flagellum membrane. It is found in the basolateral cell membrane. The protein resides in the apical cell membrane. The catalysed reaction is Li(+)(out) + H(+)(in) = Li(+)(in) + H(+)(out). The enzyme catalyses Li(+)(in) + Na(+)(out) = Li(+)(out) + Na(+)(in). It catalyses the reaction Na(+)(in) + H(+)(out) = Na(+)(out) + H(+)(in). With respect to regulation, allosterically inhibited by the N-terminal domain. Inhibited by phloretin. Its function is as follows. Electroneutral Na(+) Li(+)/H(+) antiporter that extrudes Na(+) or Li(+) in exchange for external protons across the membrane. Uses the proton gradient/membrane potential to extrude sodium. Contributes to the regulation of intracellular pH and sodium homeostasis. Also able to mediate Na(+)/Li(+) antiporter activity in kidney. May play a physiological role in renal tubular function and blood pressure homeostasis. Plays an important role for insulin secretion and clathrin-mediated endocytosis in beta-cells. Involved in sperm motility and fertility. It is controversial whether SLC9B2 plays a role in osteoclast differentiation or not. This chain is Sodium/hydrogen exchanger 9B2 (SLC9B2), found in Bison bison bison (North American plains bison).